The following is a 351-amino-acid chain: Rhodopsin (351 aa).

The Extracellular portion of the chain corresponds to 1-36 (MNGTEGQDFYVPMSNKTGVVRSPFEYPQYYLAEPWK). N2 and N15 each carry an N-linked (GlcNAc...) asparagine glycan. Residues 37–61 (FSALAAYMFMLILLGFPVNFLTLYV) form a helical membrane-spanning segment. Residues 62 to 73 (TIQHKKLRTPLN) lie on the Cytoplasmic side of the membrane. A helical membrane pass occupies residues 74-96 (YILLNLVVADLFMVFGGFTTTMY). Over 97–110 (TSMNGYFVFGVTGC) the chain is Extracellular. A disulfide bond links C110 and C187. The helical transmembrane segment at 111 to 133 (YIEGFFATLGGEIALWSLVVLAV) threads the bilayer. Residues 134–136 (ERY) carry the 'Ionic lock' involved in activated form stabilization motif. At 134-152 (ERYVVVCKPMSNFRFGENH) the chain is on the cytoplasmic side. A helical membrane pass occupies residues 153 to 173 (AIMGVAFSWIMAMACAAPPLF). The Extracellular segment spans residues 174-202 (GWSRYIPEGMQCSCGIDYYTLKPEINNES). The chain crosses the membrane as a helical span at residues 203–224 (FVIYMFVVHFMIPLAVIFFCYG). Residues 225–252 (NLVCTVKEAAAQQQESATTQKAEKEVTR) are Cytoplasmic-facing. A helical transmembrane segment spans residues 253–274 (MVIIMVIAFLICWVPYASVAFY). At 275-286 (IFTNQGSDFGPI) the chain is on the extracellular side. A helical transmembrane segment spans residues 287–308 (FMTIPAFFAKSSAIYNPVIYIV). K296 carries the post-translational modification N6-(retinylidene)lysine. Topologically, residues 309 to 351 (MNKQFRNCMITTLCCGKNPLGDEDTSAGKTETSSVSTSQVSPA) are cytoplasmic. S-palmitoyl cysteine attachment occurs at residues C322 and C323. The interval 331-351 (EDTSAGKTETSSVSTSQVSPA) is disordered. The segment covering 340–351 (TSSVSTSQVSPA) has biased composition (low complexity). S341 bears the Phosphoserine; by RK and GRK7 mark.

It belongs to the G-protein coupled receptor 1 family. Opsin subfamily. Post-translationally, contains one covalently linked retinal chromophore. Upon light absorption, the covalently bound 11-cis-retinal is converted to all-trans-retinal. After hydrolysis of the Schiff base and release of the covalently bound all-trans-retinal, active rhodopsin is regenerated by binding of a fresh molecule of 11-cis-retinal.

It localises to the membrane. The protein resides in the cell projection. The protein localises to the cilium. It is found in the photoreceptor outer segment. Photoreceptor required for image-forming vision at low light intensity. Required for photoreceptor cell viability after birth. Light-induced isomerization of 11-cis to all-trans retinal triggers a conformational change that activates signaling via G-proteins. Subsequent receptor phosphorylation mediates displacement of the bound G-protein alpha subunit by arrestin and terminates signaling. The polypeptide is Rhodopsin (RHO) (Gallus gallus (Chicken)).